The sequence spans 208 residues: Small ribosomal subunit protein uS4 (208 aa).

The region spanning 98–163 is the S4 RNA-binding domain; the sequence is TRLDNVVFRL…TPLFKEIVDG (66 aa).

This sequence belongs to the universal ribosomal protein uS4 family. Part of the 30S ribosomal subunit. Contacts protein S5. The interaction surface between S4 and S5 is involved in control of translational fidelity.

Its function is as follows. One of the primary rRNA binding proteins, it binds directly to 16S rRNA where it nucleates assembly of the body of the 30S subunit. Functionally, with S5 and S12 plays an important role in translational accuracy. The polypeptide is Small ribosomal subunit protein uS4 (Heliobacterium modesticaldum (strain ATCC 51547 / Ice1)).